Consider the following 150-residue polypeptide: 16 kDa phloem protein 1 (150 aa).

Positions 1–108 (MGMGMMEVHL…LAEGVRKGKS (108 aa)) constitute a C2 domain. The Ca(2+) site is built by aspartate 20, aspartate 27, aspartate 78, aspartate 80, and aspartate 86.

It depends on Ca(2+) as a cofactor. Sieve elements of leaves, stems, roots and flowers.

Its function is as follows. Binds to both sense and antisense RNA. Interacts with mesophyll plasmodesmata to mediate its own cell-to-cell transport and potentiate RNA trafficking. In Cucurbita maxima (Pumpkin), this protein is 16 kDa phloem protein 1 (PP16-1).